The sequence spans 215 residues: Agamous-like MADS-box protein AGL63 (215 aa).

The region spanning 1-61 (MRKGKRVIKK…NRLYDFCSNS (61 aa)) is the MADS-box domain. A K-box domain is found at 90-178 (CSDCVKTKES…GSSWEQLMWQ (89 aa)). Disordered stretches follow at residues 143-172 (ARKS…GSSW) and 184-215 (MTCQ…SSPP).

As to quaternary structure, forms homodimer. Interacts with AGL16. As to expression, expressed in bud pedicels, petals, anthers, style, ovary, seeds and embryos.

The protein resides in the nucleus. Probable transcription factor involved in the regulation of fruit growth. Contributes to integument development. Controls organ size via cell expansion. Involved in the regulation of longitudinal growth of the fruit evenly throughout the radial axis. Functions redundantly with TT16/AGL32 to repress nucellus growth and promote its degeneration. The polypeptide is Agamous-like MADS-box protein AGL63 (Arabidopsis thaliana (Mouse-ear cress)).